The chain runs to 435 residues: Glutamate-1-semialdehyde 2,1-aminomutase (435 aa).

K266 is modified (N6-(pyridoxal phosphate)lysine).

It belongs to the class-III pyridoxal-phosphate-dependent aminotransferase family. HemL subfamily. In terms of assembly, homodimer. Requires pyridoxal 5'-phosphate as cofactor.

It localises to the cytoplasm. It catalyses the reaction (S)-4-amino-5-oxopentanoate = 5-aminolevulinate. The protein operates within porphyrin-containing compound metabolism; protoporphyrin-IX biosynthesis; 5-aminolevulinate from L-glutamyl-tRNA(Glu): step 2/2. This Coxiella burnetii (strain CbuK_Q154) (Coxiella burnetii (strain Q154)) protein is Glutamate-1-semialdehyde 2,1-aminomutase.